The primary structure comprises 175 residues: ATP synthase subunit delta (175 aa).

It belongs to the ATPase delta chain family. In terms of assembly, F-type ATPases have 2 components, F(1) - the catalytic core - and F(0) - the membrane proton channel. F(1) has five subunits: alpha(3), beta(3), gamma(1), delta(1), epsilon(1). F(0) has three main subunits: a(1), b(2) and c(10-14). The alpha and beta chains form an alternating ring which encloses part of the gamma chain. F(1) is attached to F(0) by a central stalk formed by the gamma and epsilon chains, while a peripheral stalk is formed by the delta and b chains.

The protein resides in the cell membrane. F(1)F(0) ATP synthase produces ATP from ADP in the presence of a proton or sodium gradient. F-type ATPases consist of two structural domains, F(1) containing the extramembraneous catalytic core and F(0) containing the membrane proton channel, linked together by a central stalk and a peripheral stalk. During catalysis, ATP synthesis in the catalytic domain of F(1) is coupled via a rotary mechanism of the central stalk subunits to proton translocation. In terms of biological role, this protein is part of the stalk that links CF(0) to CF(1). It either transmits conformational changes from CF(0) to CF(1) or is implicated in proton conduction. This chain is ATP synthase subunit delta, found in Lactococcus lactis subsp. lactis (strain IL1403) (Streptococcus lactis).